The chain runs to 638 residues: Probable glycerol-3-phosphate dehydrogenase, mitochondrial (638 aa).

Aspartate 100–glutamate 128 serves as a coordination point for FAD.

Belongs to the FAD-dependent glycerol-3-phosphate dehydrogenase family. It depends on FAD as a cofactor.

The protein resides in the mitochondrion. The catalysed reaction is a quinone + sn-glycerol 3-phosphate = dihydroxyacetone phosphate + a quinol. It participates in polyol metabolism; glycerol degradation via glycerol kinase pathway; glycerone phosphate from sn-glycerol 3-phosphate (anaerobic route): step 1/1. This is Probable glycerol-3-phosphate dehydrogenase, mitochondrial from Dictyostelium discoideum (Social amoeba).